A 135-amino-acid polypeptide reads, in one-letter code: Histone H1, macronuclear (135 aa).

The segment covering 1–17 has biased composition (low complexity); sequence MPAKTATAVKRTTTTKK. The tract at residues 1-135 is disordered; it reads MPAKTATAVK…GGKKKSAKKN (135 aa). 2 stretches are compositionally biased toward basic residues: residues 18–54 and 62–79; these read SAAK…RRTP and KATK…RSAT. Over residues 80 to 112 the composition is skewed to low complexity; that stretch reads KKTTAAPAAAAAPATDAPAAAATPSKATGSAKK. A compositionally biased stretch (basic residues) spans 113-135; sequence ASARKSSAKKPAKGGKKKSAKKN.

It localises to the nucleus. The protein resides in the chromosome. Its function is as follows. Histones H1 are necessary for the condensation of nucleosome chains into higher-order structures. In Euplotes eurystomus (Ciliate), this protein is Histone H1, macronuclear.